A 300-amino-acid polypeptide reads, in one-letter code: Inositol polyphosphate multikinase beta (300 aa).

Serine 78 carries the phosphoserine modification.

This sequence belongs to the inositol phosphokinase (IPK) family. As to quaternary structure, interacts with KIN10 and KIN11. Phosphorylated by KIN10. As to expression, expressed in leaves, stems, roots, siliques and flowers. Detected in vascular strands, stigma cells, the abscission zones of fully elongated siliques, the root central cylinder and the root tip.

It is found in the nucleus. It carries out the reaction 1D-myo-inositol 1,4,5-trisphosphate + 2 ATP = 1D-myo-inositol 1,3,4,5,6-pentakisphosphate + 2 ADP + 2 H(+). It catalyses the reaction 1D-myo-inositol 1,3,4,6-tetrakisphosphate + ATP = 1D-myo-inositol 1,3,4,5,6-pentakisphosphate + ADP + H(+). Down-regulated by KIN10 through its protein phosphorylation. Functionally, inositol phosphate kinase with a broad substrate specificity. Phosphorylates inositol 1,4,5-trisphosphate (Ins(1,4,5)P3), inositol 1,4,5,6-tetrakisphosphate (Ins(1,4,5,6)P4), inositol 1,3,4,5-tetrakisphosphate (Ins(1,3,4,5)P4), inositol 1,3,4,6-tetrakisphosphate (Ins(1,3,4,6)P4) and inositol 1,2,3,4,6-pentakisphosphate (Ins(1,2,3,4,6)P5) but not inositol 1,4-bisphosphate (Ins(1,4)P2), inositol 1,3,4-trisphosphate (Ins(1,3,4)P3), inositol 1,2,6-trisphosphate (Ins(1,2,6)P3), inositol 3,4,5,6-tetrakisphosphate (Ins(3,4,5,6)P4), inositol 1,3,4,5,6-pentakisphosphate (Ins(1,3,4,5,6)P5), inositol 1,2,4,5,6-pentakisphosphate (Ins(1,2,4,5,6)P5) or inositol hexakisphosphate (InsP6). Involved in the auxin signaling pathway. Regulates axillary shoot branching and is required for phytate synthesis in seeds. The protein is Inositol polyphosphate multikinase beta (IPK2b) of Arabidopsis thaliana (Mouse-ear cress).